Consider the following 432-residue polypeptide: Enolase (432 aa).

Position 167 (glutamine 167) interacts with (2R)-2-phosphoglycerate. Residue glutamate 209 is the Proton donor of the active site. Mg(2+) is bound by residues aspartate 246, glutamate 291, and aspartate 318. The (2R)-2-phosphoglycerate site is built by lysine 343, arginine 372, serine 373, and lysine 394. The active-site Proton acceptor is lysine 343.

The protein belongs to the enolase family. As to quaternary structure, component of the RNA degradosome, a multiprotein complex involved in RNA processing and mRNA degradation. The cofactor is Mg(2+).

It localises to the cytoplasm. The protein resides in the secreted. Its subcellular location is the cell surface. It carries out the reaction (2R)-2-phosphoglycerate = phosphoenolpyruvate + H2O. Its pathway is carbohydrate degradation; glycolysis; pyruvate from D-glyceraldehyde 3-phosphate: step 4/5. In terms of biological role, catalyzes the reversible conversion of 2-phosphoglycerate (2-PG) into phosphoenolpyruvate (PEP). It is essential for the degradation of carbohydrates via glycolysis. The protein is Enolase of Aliivibrio fischeri (strain ATCC 700601 / ES114) (Vibrio fischeri).